The chain runs to 872 residues: Alanine--tRNA ligase (872 aa).

Residues His-558, His-562, Cys-660, and His-664 each contribute to the Zn(2+) site.

Belongs to the class-II aminoacyl-tRNA synthetase family. The cofactor is Zn(2+).

It localises to the cytoplasm. It catalyses the reaction tRNA(Ala) + L-alanine + ATP = L-alanyl-tRNA(Ala) + AMP + diphosphate. Its function is as follows. Catalyzes the attachment of alanine to tRNA(Ala) in a two-step reaction: alanine is first activated by ATP to form Ala-AMP and then transferred to the acceptor end of tRNA(Ala). Also edits incorrectly charged Ser-tRNA(Ala) and Gly-tRNA(Ala) via its editing domain. This is Alanine--tRNA ligase from Chlamydia pneumoniae (Chlamydophila pneumoniae).